The chain runs to 122 residues: Urease subunit beta (122 aa).

Belongs to the urease beta subunit family. In terms of assembly, heterotrimer of UreA (gamma), UreB (beta) and UreC (alpha) subunits. Three heterotrimers associate to form the active enzyme.

The protein resides in the cytoplasm. The catalysed reaction is urea + 2 H2O + H(+) = hydrogencarbonate + 2 NH4(+). The protein operates within nitrogen metabolism; urea degradation; CO(2) and NH(3) from urea (urease route): step 1/1. The sequence is that of Urease subunit beta from Lysinibacillus sphaericus (strain C3-41).